We begin with the raw amino-acid sequence, 121 residues long: MTMIMRSIIDSLEALFSSFFSSIAPNLYEVLNFHCKKHTGMNFAEATLKNPKLTYEFLVKFFDSEMAVDVLDYLLSNFLKKYSIRAYGILKSFKSGDNKKLIEVAKLYSKVMQNGGGKDRD.

This is an uncharacterized protein from Archaeoglobus fulgidus (strain ATCC 49558 / DSM 4304 / JCM 9628 / NBRC 100126 / VC-16).